The chain runs to 120 residues: Non-specific lipid-transfer protein (120 aa).

Positions M1–A26 are cleaved as a signal peptide. 4 disulfides stabilise this stretch: C30–C79, C40–C56, C57–C102, and C77–C116.

Belongs to the plant LTP family. In terms of tissue distribution, expressed in protoderm cells of somatic and zygotic embryos, and transiently expressed in epidermal cell layers of leaves, flowers and seeds.

Plant non-specific lipid-transfer proteins transfer phospholipids as well as galactolipids across membranes. May play a role in wax or cutin deposition in the cell walls of expanding epidermal cells and certain secretory tissues. In Daucus carota (Wild carrot), this protein is Non-specific lipid-transfer protein (EP2).